A 456-amino-acid chain; its full sequence is MRPGLWETCFWLWGPLLWLSIGSSGNVPPTTQPKCTDFQSANLLRGTNLKVQFLLFTPSDPSCGQLVEEGSDIRSSEFNASLGTKVIIHGFRALGTKPSWIDKFISAVLRAADANVIAVDWVYGSTGVYYSAVENVVKLSLEISRFLSKLLELGVSESSIHIIGVSLGAHVGGMVGHFYKGQLGQITGLDPAGPEYTRASLEERLDAGDALFVEAIHTDTDNLGIRIPVGHVDYFVNGGQDQPGCPAFFHAGYNYLICDHMRAVHLYISALENTCPLMAFPCASYKAFLAGDCLDCFNPFLLSCPRIGLVERGGVMIEPLPKEVKVYLLTTSSAPYCVHHSLVEFYLKEKRKKDTSIEVTFLSNNVTSSVKITIPKQQLEGRGVMAHPNPQCQINQVKLKFQVSSRVWRKDRTPVVGTFCTAPLPVNDSKKTVCIPEPVRLQAGVPAFQDLKIACV.

The first 25 residues, 1 to 25 (MRPGLWETCFWLWGPLLWLSIGSSG), serve as a signal peptide directing secretion. The Nucleophile role is filled by Ser166. The active-site Charge relay system is Asp190. The cysteines at positions 245 and 258 are disulfide-linked. His260 acts as the Charge relay system in catalysis. 2 disulfides stabilise this stretch: Cys282/Cys293 and Cys296/Cys304. Asn365 carries N-linked (GlcNAc...) asparagine glycosylation.

This sequence belongs to the AB hydrolase superfamily. Lipase family.

It localises to the secreted. The enzyme catalyses a 1,2-diacyl-sn-glycero-3-phospho-L-serine + H2O = a 2-acyl-sn-glycero-3-phospho-L-serine + a fatty acid + H(+). It carries out the reaction 1,2-di-(9Z)-octadecenoyl-sn-glycero-3-phospho-L-serine + H2O = 2-(9Z-octadecenoyl)-sn-glycero-3-phospho-L-serine + (9Z)-octadecenoate + H(+). It catalyses the reaction 1-hexadecanoyl-2-(5Z,8Z,11Z,14Z-eicosatetraenoyl)-sn-glycero-3-phospho-L-serine + H2O = 2-(5Z,8Z,11Z,14Z)-eicosatetraenoyl-sn-glycero-3-phospho-L-serine + hexadecanoate + H(+). The catalysed reaction is a 1-acyl-sn-glycero-3-phospho-L-serine + H2O = sn-glycero-3-phospho-L-serine + a fatty acid + H(+). The enzyme catalyses 1-(9Z-octadecenoyl)-sn-glycero-3-phospho-L-serine + H2O = sn-glycero-3-phospho-L-serine + (9Z)-octadecenoate + H(+). Its function is as follows. Hydrolyzes the ester bond of the acyl group attached at the sn-1 position of phosphatidylserines (phospholipase A1 activity) and 1-acyl-2-lysophosphatidylserines (lysophospholipase activity) in the pathway of phosphatidylserines acyl chain remodeling. Cleaves phosphatidylserines exposed on the outer leaflet of the plasma membrane of apoptotic cells producing 2-acyl-1-lysophosphatidylserines, which in turn enhance mast cell activation and histamine production. Has no activity toward other glycerophospholipids including phosphatidylcholines, phosphatidylethanolamines, phosphatidic acids or phosphatidylinositols, or glycerolipids such as triolein. This Mus musculus (Mouse) protein is Phospholipase A1 member A.